The primary structure comprises 490 residues: Keratin, type II cytoskeletal 8 (490 aa).

The segment covering 1–27 has biased composition (polar residues); that stretch reads MSIRVTQKSYKMSTSGPRAFSSRSFTS. The segment at 1–48 is disordered; sequence MSIRVTQKSYKMSTSGPRAFSSRSFTSGPGARISSSSFSRVGSSSSSF. Residues 1–96 are head; that stretch reads MSIRVTQKSY…DPNIQAVRTQ (96 aa). Ser9 carries the phosphoserine; by PKC/PRKCE modification. A Glycyl lysine isopeptide (Lys-Gly) (interchain with G-Cter in SUMO2) cross-link involves residue Lys11. Residues Ser13, Ser15, Ser21, and Ser22 each carry the phosphoserine modification. Omega-N-methylarginine is present on Arg23. Ser24 carries the post-translational modification Phosphoserine; by PKC/PRKCE. A Phosphothreonine modification is found at Thr26. The residue at position 27 (Ser27) is a Phosphoserine. Arg32 bears the Omega-N-methylarginine mark. A phosphoserine mark is found at Ser34, Ser37, and Ser39. Positions 34 to 48 are enriched in low complexity; the sequence is SSSSFSRVGSSSSSF. Arg40 is subject to Omega-N-methylarginine. A phosphoserine mark is found at Ser43, Ser44, and Ser47. Arg49 carries the asymmetric dimethylarginine; alternate modification. At Arg49 the chain carries Omega-N-methylarginine; alternate. The residue at position 51 (Ser51) is a Phosphoserine. The residue at position 80 (Ser80) is a Phosphoserine; by MAPK. The coil 1A stretch occupies residues 97 to 132; sequence EKEQIKSLNNKFASFIDKVRFLEQQNKMLETKWSLL. Residues 97–408 form the IF rod domain; sequence EKEQIKSLNN…KLLEGEESRL (312 aa). N6-malonyllysine is present on Lys107. Residues Lys128 and Lys136 each participate in a glycyl lysine isopeptide (Lys-Gly) (interchain with G-Cter in SUMO2) cross-link. Residues 133–149 are linker 1; it reads QQQKTSRSNMDNMFESY. Residues 150–241 are coil 1B; that stretch reads INNLRRQLEA…QIHEEEIREL (92 aa). Residue Lys203 forms a Glycyl lysine isopeptide (Lys-Gly) (interchain with G-Cter in SUMO1); alternate linkage. A Glycyl lysine isopeptide (Lys-Gly) (interchain with G-Cter in SUMO2); alternate cross-link involves residue Lys203. Lys213 bears the N6-acetyllysine mark. The tract at residues 242-265 is linker 12; the sequence is QSQISDTSVVLSMDNSRSLDMDGI. Ser259 and Ser280 each carry phosphoserine. Residues 266–403 are coil 2; the sequence is IAEVRAQYED…ITTYRKLLEG (138 aa). The tract at residues 267–387 is necessary for interaction with PNN; that stretch reads AEVRAQYEDI…REYQELMNVK (121 aa). Lys291 participates in a covalent cross-link: Glycyl lysine isopeptide (Lys-Gly) (interchain with G-Cter in SUMO2). A Glycyl lysine isopeptide (Lys-Gly) (interchain with G-Cter in SUMO2); alternate cross-link involves residue Lys301. Residue Lys301 is modified to N6-acetyllysine; alternate. Lys310 is covalently cross-linked (Glycyl lysine isopeptide (Lys-Gly) (interchain with G-Cter in SUMO2)). A Glycyl lysine isopeptide (Lys-Gly) (interchain with G-Cter in SUMO2); alternate cross-link involves residue Lys331. Lys331 carries the post-translational modification N6-acetyllysine; alternate. Ser336 is subject to Phosphoserine. Residue Lys399 forms a Glycyl lysine isopeptide (Lys-Gly) (interchain with G-Cter in SUMO2) linkage. Positions 404–490 are tail; the sequence is EESRLESGMQ…VSESSDVVSK (87 aa). A phosphoserine mark is found at Ser406, Ser410, Ser416, Ser423, Ser430, Ser432, and Ser438. Residue Lys479 forms a Glycyl lysine isopeptide (Lys-Gly) (interchain with G-Cter in SUMO1); alternate linkage. Residue Lys479 forms a Glycyl lysine isopeptide (Lys-Gly) (interchain with G-Cter in SUMO2); alternate linkage. Phosphoserine occurs at positions 482, 484, 485, and 489.

This sequence belongs to the intermediate filament family. In terms of assembly, heterotetramer of two type I and two type II keratins. Forms a heterodimer with KRT18. Associates with KRT20. Interacts with PLEC isoform 1C, when in a heterodimer with KRT18. Interacts with PNN. When associated with KRT19, interacts with DMD. Interacts with TCHP. Interacts with APEX1. Interacts with GPER1. Interacts with EPPK1. Interacts with PKP1 and PKP2. Post-translationally, phosphorylation on serine residues is enhanced during EGF stimulation and mitosis. Ser-80 phosphorylation plays an important role in keratin filament reorganization. In terms of processing, O-glycosylated. O-GlcNAcylation at multiple sites increases solubility, and decreases stability by inducing proteasomal degradation. O-glycosylated (O-GlcNAcylated), in a cell cycle-dependent manner. In terms of tissue distribution, expressed in abundance in the epithelia of colon, bladder, ileum, and stomach, with lower expression observed in earskin (at protein level). Also expressed in pancreas, liver, dudenum and jejunum.

The protein localises to the cytoplasm. The protein resides in the nucleus. It localises to the nucleoplasm. Its subcellular location is the nucleus matrix. In terms of biological role, together with KRT19, helps to link the contractile apparatus to dystrophin at the costameres of striated muscle. The polypeptide is Keratin, type II cytoskeletal 8 (Krt8) (Mus musculus (Mouse)).